We begin with the raw amino-acid sequence, 378 residues long: Biotin synthase, mitochondrial (378 aa).

A mitochondrion-targeting transit peptide spans 1–26; that stretch reads MMLVRSVFRSQLRPSVSGGLQSASCY. A Radical SAM core domain is found at 79–308; the sequence is REVQQCTLLS…KAMVRLSAGR (230 aa). 3 residues coordinate [4Fe-4S] cluster: Cys-94, Cys-98, and Cys-101. Positions 138, 171, 231, and 303 each coordinate [2Fe-2S] cluster. The segment at 357 to 378 is disordered; the sequence is PPSFSEDDSESENCEKVASASH.

The protein belongs to the radical SAM superfamily. Biotin synthase family. It depends on [4Fe-4S] cluster as a cofactor. The cofactor is [2Fe-2S] cluster.

The protein resides in the mitochondrion. It carries out the reaction (4R,5S)-dethiobiotin + (sulfur carrier)-SH + 2 reduced [2Fe-2S]-[ferredoxin] + 2 S-adenosyl-L-methionine = (sulfur carrier)-H + biotin + 2 5'-deoxyadenosine + 2 L-methionine + 2 oxidized [2Fe-2S]-[ferredoxin]. Its pathway is cofactor biosynthesis; biotin biosynthesis; biotin from 7,8-diaminononanoate: step 2/2. The chain is Biotin synthase, mitochondrial (BIO2) from Arabidopsis thaliana (Mouse-ear cress).